Consider the following 331-residue polypeptide: Ketol-acid reductoisomerase (NADP(+)) (331 aa).

Positions 2 to 182 (AQLFYDSDAD…GGTRAGILET (181 aa)) constitute a KARI N-terminal Rossmann domain. Residues 25-28 (YGSQ), Ser51, Ser53, and 83-86 (DEFQ) each bind NADP(+). His108 is an active-site residue. NADP(+) is bound at residue Gly134. Positions 183–328 (NFKEETETDL…KGLRAMFSWL (146 aa)) constitute a KARI C-terminal knotted domain. Mg(2+)-binding residues include Asp191, Glu195, Glu227, and Glu231. Residue Ser252 coordinates substrate.

This sequence belongs to the ketol-acid reductoisomerase family. Mg(2+) serves as cofactor.

It catalyses the reaction (2R)-2,3-dihydroxy-3-methylbutanoate + NADP(+) = (2S)-2-acetolactate + NADPH + H(+). The catalysed reaction is (2R,3R)-2,3-dihydroxy-3-methylpentanoate + NADP(+) = (S)-2-ethyl-2-hydroxy-3-oxobutanoate + NADPH + H(+). It functions in the pathway amino-acid biosynthesis; L-isoleucine biosynthesis; L-isoleucine from 2-oxobutanoate: step 2/4. It participates in amino-acid biosynthesis; L-valine biosynthesis; L-valine from pyruvate: step 2/4. Functionally, involved in the biosynthesis of branched-chain amino acids (BCAA). Catalyzes an alkyl-migration followed by a ketol-acid reduction of (S)-2-acetolactate (S2AL) to yield (R)-2,3-dihydroxy-isovalerate. In the isomerase reaction, S2AL is rearranged via a Mg-dependent methyl migration to produce 3-hydroxy-3-methyl-2-ketobutyrate (HMKB). In the reductase reaction, this 2-ketoacid undergoes a metal-dependent reduction by NADPH to yield (R)-2,3-dihydroxy-isovalerate. This Prochlorococcus marinus (strain MIT 9303) protein is Ketol-acid reductoisomerase (NADP(+)).